We begin with the raw amino-acid sequence, 480 residues long: Proline--tRNA ligase (480 aa).

This sequence belongs to the class-II aminoacyl-tRNA synthetase family. ProS type 3 subfamily. Homodimer.

It localises to the cytoplasm. The enzyme catalyses tRNA(Pro) + L-proline + ATP = L-prolyl-tRNA(Pro) + AMP + diphosphate. Functionally, catalyzes the attachment of proline to tRNA(Pro) in a two-step reaction: proline is first activated by ATP to form Pro-AMP and then transferred to the acceptor end of tRNA(Pro). The polypeptide is Proline--tRNA ligase (Chloroflexus aurantiacus (strain ATCC 29364 / DSM 637 / Y-400-fl)).